Reading from the N-terminus, the 639-residue chain is Wall-associated receptor kinase-like 15 (639 aa).

A signal peptide spans 1–25 (MELPWLSLTTFTLSLLIYFSSTTQA). Residues 26-282 (FKRCPNCGST…KRKSCKRWSN (257 aa)) are Extracellular-facing. N-linked (GlcNAc...) asparagine glycans are attached at residues Asn-68, Asn-115, Asn-126, Asn-141, and Asn-241. The helical transmembrane segment at 283–303 (LPLLGGLAGGVGAILIAGFIT) threads the bilayer. The Cytoplasmic portion of the chain corresponds to 304 to 639 (KTIVSKQNRR…KEIENILHGI (336 aa)). A Protein kinase domain is found at 354–639 (FAKSNLLGFG…KEIENILHGI (286 aa)). ATP contacts are provided by residues 360-368 (LGFGGFGEV) and Lys-382. Catalysis depends on Asp-484, which acts as the Proton acceptor.

It belongs to the protein kinase superfamily. Ser/Thr protein kinase family.

The protein resides in the membrane. The enzyme catalyses L-seryl-[protein] + ATP = O-phospho-L-seryl-[protein] + ADP + H(+). It catalyses the reaction L-threonyl-[protein] + ATP = O-phospho-L-threonyl-[protein] + ADP + H(+). Its function is as follows. Putative serine/threonine-protein kinase that may function as a signaling receptor of extracellular matrix component. The protein is Wall-associated receptor kinase-like 15 (WAKL15) of Arabidopsis thaliana (Mouse-ear cress).